The following is a 752-amino-acid chain: MGPLMVLFCLLFLYPGLADSAPSCPQNVNISGGTFTLSHGWAPGSLLTYSCPQGLYPSPASRLCKSSGQWQTPRATRSLSKAVCKPVRCPAPVSFENGIYTPRLGSYPVGGNVSFECEDGFILRGSPVRQCRPNGMWDGETAVCDNGAGHCPNPGISLGAVRTGFRFGHGDKVRYRCSSNLVLTGSSERECQGNGVWSGTEPICRQPYSYDFPEDVAPALGTSFSHMLGATNPTQKTKESLGRKIQIQRSGHLNLYLLLDCSQSVSENDFLIFKESASLMVDRIFSFEINVSVAIITFASEPKVLMSVLNDNSRDMTDVISSLENANYKDHENGTGTNTYAALNSVYLMMNNQMRLLGMETMAWQEIRHAIILLTDGKSNMGGSPKTAVDHIREILNINQKRNDYLDIYAIGVGKLDVDWRELNELGSKKDGERHAFILQDTKALHQVFEHMLDVSKLTDTICGVGNMSANASDQERTPWHVTIKPKSQETCRGALISDQWVLTAAHCFRDGNDHSLWRVNVGDPKSQWGKEFLIEKAVISPGFDVFAKKNQGILEFYGDDIALLKLAQKVKMSTHARPICLPCTMEANLALRRPQGSTCRDHENELLNKQSVPAHFVALNGSKLNINLKMGVEWTSCAEVVSQEKTMFPSLTDVREVVTDQFLCSGTQEDESPCKGESGGAVFLERRFRFFQVGLVSWGLYNPCLGSADKNSRKRAPRSKVPPPRDFHINLFRMQPWLRQHLGDVLNFLPL.

Positions 1 to 20 (MGPLMVLFCLLFLYPGLADS) are cleaved as a signal peptide. Sushi domains are found at residues 22–86 (PSCP…VCKP), 87–146 (VRCP…VCDN), and 149–206 (GHCP…ICRQ). Cystine bridges form between cysteine 24/cysteine 64, cysteine 51/cysteine 84, cysteine 89/cysteine 131, cysteine 117/cysteine 144, cysteine 151/cysteine 191, and cysteine 177/cysteine 204. Asparagine 29 is a glycosylation site (N-linked (GlcNAc...) asparagine). Asparagine 112 carries an N-linked (GlcNAc...) asparagine glycan. In terms of domain architecture, VWFA spans 254–452 (NLYLLLDCSQ…KALHQVFEHM (199 aa)). Residues 260-264 (DCSQS) carry the MIDAS-like motif motif. Mg(2+) is bound by residues serine 262 and serine 264. N-linked (GlcNAc...) asparagine glycans are attached at residues asparagine 290 and asparagine 333. A Mg(2+)-binding site is contributed by threonine 337. 3 cysteine pairs are disulfide-bonded: cysteine 463-cysteine 581, cysteine 492-cysteine 508, and cysteine 584-cysteine 600. One can recognise a Peptidase S1 domain in the interval 464-744 (GVGNMSANAS…MQPWLRQHLG (281 aa)). Residues asparagine 467 and asparagine 471 are each glycosylated (N-linked (GlcNAc...) asparagine). Residues histidine 507 and aspartate 561 each act as charge relay system in the active site. Asparagine 621 is a glycosylation site (N-linked (GlcNAc...) asparagine). Disulfide bonds link cysteine 638–cysteine 665 and cysteine 675–cysteine 705. Serine 679 (charge relay system) is an active-site residue.

It belongs to the peptidase S1 family. In terms of assembly, serine protease component of the C3 convertase, also named C4bC2b, composed of the serine protease complement C2b and complement C4b. Serine protease component of the C5 convertase, also named C4bC2bC3b, composed of the serine protease complement C2b, complement C3b, as well as complement C4b. It depends on Mg(2+) as a cofactor. Mn(2+) serves as cofactor. Post-translationally, cleaved and activated by different proteases depending on the complement pathway to generate complement C2a and serine protease complement C2b chains. Cleaved and activated by C1S following activation by the classical complement system. Cleaved and activated by MASP2 following activation by the lectin complement system. Cleaved and activated by GZMK following activation by the GZMK complement system.

Its subcellular location is the secreted. It is found in the cell surface. It carries out the reaction Selective cleavage of Arg-|-Ser bond in complement component C3 alpha-chain to form C3a and C3b, and Arg-|-Xaa bond in complement component C5 alpha-chain to form C5a and C5b.. In terms of biological role, precursor of the catalytic component of the C3 and C5 convertase complexes, which are part of the complement pathway, a cascade of proteins that leads to phagocytosis and breakdown of pathogens and signaling that strengthens the adaptive immune system. Component C2 is part of the classical, lectin and GZMK complement systems. Its function is as follows. Catalytic component of the complement C3 and C5 convertase complexes. Following complement activation, recruited to the surface of pathogens by complement C4b opsonin to form the C3 convertase, or C3b and C4b opsonins to form the C5 convertase. As part of the C3 convertase, cleaves and activate C3 into C3a anaphylatoxin and C3b opsonin, the next components of the complement pathways. As part of the C5 convertase, cleaves and activate C5 into C5a anaphylatoxin and C5b component of the membrane attack complex. The chain is Complement C2 from Pongo pygmaeus (Bornean orangutan).